We begin with the raw amino-acid sequence, 117 residues long: Large ribosomal subunit protein uL18 (117 aa).

The protein belongs to the universal ribosomal protein uL18 family. In terms of assembly, part of the 50S ribosomal subunit; part of the 5S rRNA/L5/L18/L25 subcomplex. Contacts the 5S and 23S rRNAs.

Functionally, this is one of the proteins that bind and probably mediate the attachment of the 5S RNA into the large ribosomal subunit, where it forms part of the central protuberance. This chain is Large ribosomal subunit protein uL18, found in Polynucleobacter asymbioticus (strain DSM 18221 / CIP 109841 / QLW-P1DMWA-1) (Polynucleobacter necessarius subsp. asymbioticus).